Reading from the N-terminus, the 702-residue chain is Antigen peptide transporter 2 (702 aa).

At 1 to 6 (MALSYL) the chain is on the lumenal side. A helical transmembrane segment spans residues 7–27 (RPWVSLLLADMALLGLLQGSL). At 28-56 (GNLLPQGLPGLWIEGTLRLGVLWGLLKVG) the chain is on the cytoplasmic side. Residues 57-77 (ELLGLVGTLLPLLCLATPLFF) form a helical membrane-spanning segment. The Lumenal portion of the chain corresponds to 78–98 (SLRALVGGTASTSVVRVASAS). A helical membrane pass occupies residues 99–119 (WGWLLAGYGAVALSWAVWAVL). At 120–147 (SPAGVQEKEPGQENRTLMKRLLKLSRPD) the chain is on the cytoplasmic side. A helical transmembrane segment spans residues 148-168 (LPFLIAAFFFLVVAVWGETLI). In terms of domain architecture, ABC transmembrane type-1 spans 151 to 434 (LIAAFFFLVV…LVYMYGDMLS (284 aa)). Topologically, residues 169–186 (PRYSGRVIDILGGDFDPD) are lumenal. Residues 187–207 (AFASAIFFMCLFSVGSSFSAG) form a helical membrane-spanning segment. Residues 208–265 (CRGGSFLFTMSRINLRIREQLFSSLLRQDLGFFQETKTGELNSRLSSDTSLMSRWLPF) are Cytoplasmic-facing. The helical transmembrane segment at 266–286 (NANILLRSLVKVVGLYFFMLQ) threads the bilayer. The Lumenal portion of the chain corresponds to 287 to 292 (VSPRLT). A helical membrane pass occupies residues 293–313 (FLSLLDLPLTIAAEKVYNPRH). Residues 300 to 388 (PLTIAAEKVY…RRVMALGMQV (89 aa)) form a part of the peptide-binding site region. At 314-373 (QAVLKEIQDAVAKAGQVVREAVGGLQTVRSFGAEEQEVSHYKEALERCRQLWWRRDLEKD) the chain is on the cytoplasmic side. A helical membrane pass occupies residues 374–394 (VYLVIRRVMALGMQVLILNCG). Residues 395-407 (VQQILAGEVTRGG) are Lumenal-facing. The helical transmembrane segment at 408-428 (LLSFLLYQEEVGQYVRNLVYM) threads the bilayer. The interval 413–432 (LYQEEVGQYVRNLVYMYGDM) is part of the peptide-binding site. The Cytoplasmic portion of the chain corresponds to 429–702 (YGDMLSNVGA…AHLVQQRLEA (274 aa)). An ABC transporter domain is found at 467-701 (VEFQDVSFSY…YAHLVQQRLE (235 aa)). 502 to 509 (GPNGSGKS) contacts ATP.

This sequence belongs to the ABC transporter superfamily. ABCB family. MHC peptide exporter (TC 3.A.1.209) subfamily. In terms of assembly, heterodimer of TAP1 and TAP2 (TAP1-TAP2). A component of the peptide loading complex (PLC), interacts via TAPBP with MHCI heterodimer; this interaction mediates peptide-MHCI assembly. Requires Mg(2+) as cofactor.

It localises to the endoplasmic reticulum membrane. It catalyses the reaction a peptide antigen(in) + ATP + H2O = a peptide antigen(out) + ADP + phosphate + H(+). ABC transporter associated with antigen processing. In complex with TAP1 mediates unidirectional translocation of peptide antigens from cytosol to endoplasmic reticulum (ER) for loading onto MHC class I (MHCI) molecules. Uses the chemical energy of ATP to export peptides against the concentration gradient. During the transport cycle alternates between 'inward-facing' state with peptide binding site facing the cytosol to 'outward-facing' state with peptide binding site facing the ER lumen. Peptide antigen binding to ATP-loaded TAP1-TAP2 induces a switch to hydrolysis-competent 'outward-facing' conformation ready for peptide loading onto nascent MHCI molecules. Subsequently ATP hydrolysis resets the transporter to the 'inward facing' state for a new cycle. As a component of the peptide loading complex (PLC), acts as a molecular scaffold essential for peptide-MHCI assembly and antigen presentation. This is Antigen peptide transporter 2 (Tap2) from Mus musculus (Mouse).